We begin with the raw amino-acid sequence, 117 residues long: Histone H1-like protein HC1 (117 aa).

Residues 57 to 117 are disordered; that stretch reads EKSGLMTRKP…KSSKSRYLRK (61 aa). Basic residues predominate over residues 66–81; sequence PATKAKKAAATKKAAP. The span at 82–94 shows a compositional bias: low complexity; it reads KPKIQAKAAPKAK. The span at 95–117 shows a compositional bias: basic residues; that stretch reads ATTKKTPAKAKAKKSSKSRYLRK.

It belongs to the histone H1/H5 family. HCT subfamily.

In terms of biological role, might have a role analogous to that of eukaryotic histone proteins. The polypeptide is Histone H1-like protein HC1 (hctA) (Chlamydia psittaci (Chlamydophila psittaci)).